A 128-amino-acid chain; its full sequence is MNLIQLLEQEEIARLTAGKTIPAFAPGDTVVVQVKVKEGNRERLQAYEGVVIAKRNRGLNSSFIVRKISSGEGVERTFQTYSPLVATIEVKRRGDVRRAKLYYLRQRSGKSARIKEKLDYKSAAGKKA.

The protein belongs to the bacterial ribosomal protein bL19 family.

In terms of biological role, this protein is located at the 30S-50S ribosomal subunit interface and may play a role in the structure and function of the aminoacyl-tRNA binding site. The protein is Large ribosomal subunit protein bL19 of Azoarcus sp. (strain BH72).